We begin with the raw amino-acid sequence, 268 residues long: 4-hydroxy-tetrahydrodipicolinate reductase (268 aa).

NAD(+) contacts are provided by residues 8–13 (GACGKM), Asp34, 95–97 (GTT), and 121–124 (APNF). His151 (proton donor/acceptor) is an active-site residue. His152 is a (S)-2,3,4,5-tetrahydrodipicolinate binding site. Lys155 functions as the Proton donor in the catalytic mechanism. (S)-2,3,4,5-tetrahydrodipicolinate is bound at residue 161-162 (GT).

The protein belongs to the DapB family.

It localises to the cytoplasm. The enzyme catalyses (S)-2,3,4,5-tetrahydrodipicolinate + NAD(+) + H2O = (2S,4S)-4-hydroxy-2,3,4,5-tetrahydrodipicolinate + NADH + H(+). The catalysed reaction is (S)-2,3,4,5-tetrahydrodipicolinate + NADP(+) + H2O = (2S,4S)-4-hydroxy-2,3,4,5-tetrahydrodipicolinate + NADPH + H(+). Its pathway is amino-acid biosynthesis; L-lysine biosynthesis via DAP pathway; (S)-tetrahydrodipicolinate from L-aspartate: step 4/4. Its function is as follows. Catalyzes the conversion of 4-hydroxy-tetrahydrodipicolinate (HTPA) to tetrahydrodipicolinate. The chain is 4-hydroxy-tetrahydrodipicolinate reductase from Dictyoglomus turgidum (strain DSM 6724 / Z-1310).